The primary structure comprises 339 residues: Isopentenyl-diphosphate delta-isomerase (339 aa).

Arginine 7–lysine 8 provides a ligand contact to substrate. FMN-binding positions include serine 65, serine 66–threonine 68, serine 96, and asparagine 125. Residue serine 96 to arginine 98 participates in substrate binding. Glutamine 160 contacts substrate. Glutamate 161 contributes to the Mg(2+) binding site. FMN-binding positions include lysine 192, threonine 222, and alanine 293–glycine 294.

The protein belongs to the IPP isomerase type 2 family. In terms of assembly, homooctamer. Dimer of tetramers. FMN serves as cofactor. The cofactor is NADPH. Mg(2+) is required as a cofactor.

Its subcellular location is the cytoplasm. It catalyses the reaction isopentenyl diphosphate = dimethylallyl diphosphate. Involved in the biosynthesis of isoprenoids. Catalyzes the 1,3-allylic rearrangement of the homoallylic substrate isopentenyl (IPP) to its allylic isomer, dimethylallyl diphosphate (DMAPP). This is Isopentenyl-diphosphate delta-isomerase from Vibrio parahaemolyticus serotype O3:K6 (strain RIMD 2210633).